A 409-amino-acid chain; its full sequence is Secreted LysM effector Blys2 (409 aa).

The first 20 residues, 1 to 20 (MTRFTTTLVAALAGANLAAA), serve as a signal peptide directing secretion. One can recognise a LysM 1 domain in the interval 24-71 (YKWRAHAGDTCDSLSSDWSVQVSDFIKWNPSVGANCSNGVTAGQEYCV). The N-linked (GlcNAc...) asparagine glycan is linked to N58. Residues 74–111 (NGAGSKPTTPPTGSPTTLTTAVTTASSTPTQPTDGAPS) form a disordered region. The span at 87-106 (SPTTLTTAVTTASSTPTQPT) shows a compositional bias: low complexity. 4 LysM domains span residues 129–176 (AWYK…YVCV), 206–253 (KWYK…FVCV), 283–330 (KFYK…YYCI), and 357–405 (KYYK…YICV).

Belongs to the secreted LysM effector family.

Its subcellular location is the secreted. It is found in the cell wall. Secreted effector that enables the plant pathogenic fungus to manipulate host defenses for successful infection. Required for the full virulence to infect insect hosts. In contrast to Blys5, Blys2 is not able to protect fungal hyphae against the hydrolytic activity of chitinase but plays an important role in evasion of insect immunities. Binds chitin. Coats and protects the cell walls of insect pathogens from host cell recognition. This chain is Secreted LysM effector Blys2, found in Beauveria bassiana (strain ARSEF 2860) (White muscardine disease fungus).